Reading from the N-terminus, the 106-residue chain is Malonate decarboxylase acyl carrier protein (106 aa).

Serine 28 is subject to O-(phosphoribosyl dephospho-coenzyme A)serine.

This sequence belongs to the MdcC family. Covalently binds the prosthetic group of malonate decarboxylase.

The protein localises to the cytoplasm. In terms of biological role, subunit of malonate decarboxylase, it is an acyl carrier protein to which acetyl and malonyl thioester residues are bound via a 2'-(5''-phosphoribosyl)-3'-dephospho-CoA prosthetic group and turn over during the catalytic mechanism. The chain is Malonate decarboxylase acyl carrier protein from Stenotrophomonas maltophilia (strain K279a).